Reading from the N-terminus, the 136-residue chain is Small ribosomal subunit protein uS9 (136 aa).

The tract at residues 97-136 (SPDNRKPLKTEGHLSRDPRAKERRKYGLKKARKAPQFSKR) is disordered. Residues 98 to 116 (PDNRKPLKTEGHLSRDPRA) show a composition bias toward basic and acidic residues. The span at 117-136 (KERRKYGLKKARKAPQFSKR) shows a compositional bias: basic residues.

Belongs to the universal ribosomal protein uS9 family.

This Prochlorococcus marinus (strain MIT 9215) protein is Small ribosomal subunit protein uS9.